The primary structure comprises 414 residues: TnpB-like protein MJ1635 (414 aa).

4 residues coordinate Zn(2+): Cys329, Cys332, Cys346, and Cys349.

It in the N-terminal section; belongs to the transposase 2 family. This sequence in the C-terminal section; belongs to the transposase 35 family.

The sequence is that of TnpB-like protein MJ1635 from Methanocaldococcus jannaschii (strain ATCC 43067 / DSM 2661 / JAL-1 / JCM 10045 / NBRC 100440) (Methanococcus jannaschii).